The primary structure comprises 81 residues: Small ribosomal subunit protein uS17 (81 aa).

It belongs to the universal ribosomal protein uS17 family. As to quaternary structure, part of the 30S ribosomal subunit.

In terms of biological role, one of the primary rRNA binding proteins, it binds specifically to the 5'-end of 16S ribosomal RNA. This chain is Small ribosomal subunit protein uS17, found in Trichormus variabilis (strain ATCC 29413 / PCC 7937) (Anabaena variabilis).